The sequence spans 350 residues: Nuclear pore complex-interacting protein family member A1 (350 aa).

Residues 306–325 (KTPPECLLTPLPPSAPPSVD) are disordered.

Belongs to the NPIP family. In terms of assembly, may associate with the nuclear pore complex. Widely expressed.

The protein localises to the nucleus. The protein resides in the nuclear pore complex. Its subcellular location is the nucleus membrane. The polypeptide is Nuclear pore complex-interacting protein family member A1 (NPIPA1) (Homo sapiens (Human)).